The primary structure comprises 524 residues: Dihydromonacolin L monooxygenase mokC (524 aa).

The Cytoplasmic portion of the chain corresponds to 1-25; it reads MTVPTDTVSRRLQSLAWSDIKQHAP. Residues 26–47 traverse the membrane as a helical; Signal-anchor for type II membrane protein segment; sequence WLPSSRTLVSGFLCLILLQILY. Topologically, residues 48 to 524 are lumenal; that stretch reads SRGRKSDLRV…LMMRRRDEDL (477 aa). 2 N-linked (GlcNAc...) asparagine glycosylation sites follow: Asn-396 and Asn-401. Cys-467 provides a ligand contact to heme.

Belongs to the cytochrome P450 family. Heme is required as a cofactor.

Its subcellular location is the endoplasmic reticulum membrane. The catalysed reaction is dihydromonacolin L carboxylate + reduced [NADPH--hemoprotein reductase] + O2 = monacolin L carboxylate + oxidized [NADPH--hemoprotein reductase] + 2 H2O + H(+). The enzyme catalyses monacolin L carboxylate + reduced [NADPH--hemoprotein reductase] + O2 = monacolin J carboxylate + oxidized [NADPH--hemoprotein reductase] + H2O + H(+). Its pathway is polyketide biosynthesis; lovastatin biosynthesis. Cytochrome P450 monooxygenase; part of the gene cluster that mediates the biosynthesis of monakolin K, also known as lovastatin, and which acts as a potent competitive inhibitor of HMG-CoA reductase. Monakolin K biosynthesis is performed in two stages. The first stage is catalyzed by the nonaketide synthase mokA, which belongs to type I polyketide synthases and catalyzes the iterative nine-step formation of the polyketide. This PKS stage is completed by the action of dehydrogenase mokE, which catalyzes the NADPH-dependent reduction of the unsaturated tetra-, penta- and heptaketide intermediates that arise during the mokA-mediated biosynthesis of the nonaketide chain and leads to dihydromonacolin L. Covalently bound dihydromonacolin L is released from mokA by the mokD esterase. Conversion of dihydromonacolin L into monacolin L and then monacolin J is subsequently performed with the participation of molecular oxygen and P450 monoogygenase mokC. Finally, mokF performs the conversion of monacoline J to monacoline K through the addition of the side-chain diketide moiety (2R)-2-methylbutanoate produced by the diketide synthase mokB. This is Dihydromonacolin L monooxygenase mokC from Monascus pilosus (Red mold).